The chain runs to 604 residues: Netrin-1 (604 aa).

A signal peptide spans 1 to 24 (MMRAVWEALAALAAVACLVGAVRG). A Laminin N-terminal domain is found at 47-284 (HPRRCIPDFV…AVSDLQVGGR (238 aa)). Asn95, Asn116, and Asn131 each carry an N-linked (GlcNAc...) asparagine glycan. 15 disulfide bridges follow: Cys119–Cys152, Cys285–Cys294, Cys287–Cys304, Cys306–Cys315, Cys318–Cys338, Cys341–Cys350, Cys343–Cys368, Cys371–Cys380, Cys383–Cys401, Cys404–Cys416, Cys406–Cys423, Cys425–Cys434, Cys437–Cys451, Cys472–Cys544, and Cys491–Cys601. Laminin EGF-like domains follow at residues 285–340 (CKCN…ECVA), 341–403 (CNCN…ACKA), and 404–453 (CDCH…PCIK). Asn417 carries an N-linked (GlcNAc...) asparagine glycan. Residues 472–601 (CDSYCKASKG…FQQREKKGKC (130 aa)) enclose the NTR domain. The Cell attachment site motif lies at 530–532 (RGD).

In terms of assembly, binds to its receptors; DCC, UNC5A, UNC5B, UNC5C and probably UNC5D. Binds to its receptor; DSCAM. Interacts with APP. In the embryo, widely expressed in the developing nervous system and in mesodermal tissues.

The protein localises to the secreted. Its subcellular location is the cytoplasm. Functionally, netrins control guidance of CNS commissural axons and peripheral motor axons. Its association with either DCC or some UNC5 receptors will lead to axon attraction or repulsion, respectively. Binding to UNC5C might cause dissociation of UNC5C from polymerized TUBB3 in microtubules and thereby lead to increased microtubule dynamics and axon repulsion. Involved in dorsal root ganglion axon projection towards the spinal cord. It also serves as a survival factor via its association with its receptors which prevent the initiation of apoptosis. Involved in colorectal tumorigenesis by regulating apoptosis. The chain is Netrin-1 (Ntn1) from Mus musculus (Mouse).